A 96-amino-acid chain; its full sequence is CLAVATA3/ESR (CLE)-related protein 43 (96 aa).

The first 28 residues, 1-28, serve as a signal peptide directing secretion; sequence MGCRDILLTFSVALLLISLFQIWLFREG. A disordered region spans residues 71–96; sequence FGLNNTNSRFEDSNRRIPSSPDRLHN. Asparagine 74 carries an N-linked (GlcNAc...) asparagine glycan. Proline 88 and proline 91 each carry hydroxyproline. An O-linked (Ara...) hydroxyproline glycan is attached at proline 91.

The protein belongs to the CLV3/ESR signal peptide family. Post-translationally, the O-glycosylation (arabinosylation) of the hydroxyproline Pro-91 enhances binding affinity of the CLE43p peptide for its receptor. In terms of tissue distribution, expressed at low levels in seedlings.

It localises to the secreted. The protein localises to the extracellular space. Extracellular signal peptide that regulates cell fate. Promotes pollen tube growth prolongation in a SKM1 and SKM2-dependent manner, especially under relatively high temperature (at 30 degrees Celsius), thus conferring tolerance against high temperature probably through the maintenance of mitochondrial activity. The chain is CLAVATA3/ESR (CLE)-related protein 43 from Arabidopsis thaliana (Mouse-ear cress).